The primary structure comprises 294 residues: BOI-related E3 ubiquitin-protein ligase 1 (294 aa).

A WRD domain region spans residues 168–204; it reads LQERVKNLYVENQIWRDLAQTNEATANNLRSNLEQVL. The stretch at 183–212 forms a coiled coil; that stretch reads RDLAQTNEATANNLRSNLEQVLAQVDDLDA. Residues 244–281 form an RING-type zinc finger; the sequence is CKRCGELTASVLVLPCRHLCLCTVCGSSALLRTCPVCD.

As to quaternary structure, interacts with the DELLA proteins GAI, RGA, RGL1, RGL2 and RGL3.

It carries out the reaction S-ubiquitinyl-[E2 ubiquitin-conjugating enzyme]-L-cysteine + [acceptor protein]-L-lysine = [E2 ubiquitin-conjugating enzyme]-L-cysteine + N(6)-ubiquitinyl-[acceptor protein]-L-lysine.. It functions in the pathway protein degradation; proteasomal ubiquitin-dependent pathway. E3 ubiquitin-protein ligase involved in regulation of abiotic stress responses. Not involved in ubiquitination of MYB108/BOS1. Has no effect on the stability of the DELLA proteins. This chain is BOI-related E3 ubiquitin-protein ligase 1 (BRG1), found in Arabidopsis thaliana (Mouse-ear cress).